The sequence spans 689 residues: Methionine--tRNA ligase (689 aa).

Residues 15–25 (PYANGPIHLGH) carry the 'HIGH' region motif. Zn(2+) contacts are provided by Cys146, Cys149, Cys159, and Cys162. The 'KMSKS' region motif lies at 332 to 336 (KMSKS). Lys335 is an ATP binding site. The tract at residues 554 to 574 (DAPKTAAPEKTAEASSVSSEP) is disordered. The tRNA-binding domain maps to 588–689 (DFAKIDLRIA…EGAQPGMRVK (102 aa)).

It belongs to the class-I aminoacyl-tRNA synthetase family. MetG type 1 subfamily. Homodimer. The cofactor is Zn(2+).

It localises to the cytoplasm. It catalyses the reaction tRNA(Met) + L-methionine + ATP = L-methionyl-tRNA(Met) + AMP + diphosphate. Its function is as follows. Is required not only for elongation of protein synthesis but also for the initiation of all mRNA translation through initiator tRNA(fMet) aminoacylation. The polypeptide is Methionine--tRNA ligase (Shewanella baltica (strain OS185)).